The primary structure comprises 549 residues: Peptide transport periplasmic protein SapA (549 aa).

The first 21 residues, 1–21, serve as a signal peptide directing secretion; it reads MRLVLSSLIVIAGLLSSQATA.

It belongs to the bacterial solute-binding protein 5 family.

Its subcellular location is the periplasm. Its function is as follows. Involved in a peptide intake transport system that plays a role in the resistance to antimicrobial peptides. This Salmonella typhimurium (strain LT2 / SGSC1412 / ATCC 700720) protein is Peptide transport periplasmic protein SapA.